A 397-amino-acid polypeptide reads, in one-letter code: Teichoic acid D-alanine hydrolase (397 aa).

Residues 1 to 27 (MKFNKEKLVIHACVLLFIIISIGLVFH) form the signal peptide.

The protein resides in the cell membrane. It carries out the reaction [(4-D-Ala)-(2-GlcNAc)-Rib-ol-P]n-[Gro-P]m-beta-D-ManNAc-(1-&gt;4)-alpha-D-GlcNAc-P-peptidoglycan + n H2O = [(2-GlcNAc)-Rib-ol-P]n-[Gro-P]m-beta-D-ManNAc-(1-&gt;4)-alpha-D-GlcNAc-P-peptidoglycan + n D-alanine.. Catalyzes the liberation of D-alanyl moieties present on wall teichoic acid (WTA) and lipoteichoic acid (LTA). Affects the methicillin resistance level and autolysis in the presence of Triton X-100 as well as the cell wall structure. The protein is Teichoic acid D-alanine hydrolase (fmtA) of Staphylococcus aureus (strain MRSA252).